The following is a 407-amino-acid chain: Odorant receptor 67a (407 aa).

Over 1–40 the chain is Cytoplasmic; it reads MDNVAEMPEEKYVEVDDFLRLAVKFYNTLGIDPYETGRKR. Residues 41–61 traverse the membrane as a helical segment; that stretch reads TIWFQIYFALNMFNMVFSFYA. The Extracellular portion of the chain corresponds to 62 to 79; that stretch reads EVATLVDRLRDNENFLES. A helical membrane pass occupies residues 80–100; that stretch reads CILLSYVSFVVMGLSKIGAVM. At 101 to 144 the chain is on the cytoplasmic side; the sequence is KKKPKMTALVRQLETCFPSPSAKVQEEYAVKSWLKRCHIYTKGF. A helical transmembrane segment spans residues 145–165; sequence GGLFMIMYFAHALIPLFIYFI. Topologically, residues 166–208 are extracellular; sequence QRVLLHYPDAKQIMPFYQLEPWEFRDSWLFYPSYFHQSSAGYT. The helical transmembrane segment at 209–229 threads the bilayer; it reads ATCGSIAGDLMIFAVVLQVIM. Residues 230–278 lie on the Cytoplasmic side of the membrane; the sequence is HYERLAKVLREFKIQAHNAPNGAKEDIRKLQSLVANHIDILRLTDLMNE. A helical membrane pass occupies residues 279–300; the sequence is VFGIPLLLNFIASALLVCLVGV. Over 301–314 the chain is Extracellular; the sequence is QLTIALSPEYFCKQ. A helical transmembrane segment spans residues 315–331; it reads MLFLISVLLEVYLLCSF. The Cytoplasmic segment spans residues 332-378; the sequence is SQRLIDASENVGHAAYDMDWLGSDKRFKKILIFISMRSQKPVCLKAT. Residues 379–401 traverse the membrane as a helical segment; that stretch reads VVLDLSMPTMSIFLGMSYKFFCA. The Extracellular segment spans residues 402–407; the sequence is VRTMYQ.

The protein belongs to the insect chemoreceptor superfamily. Heteromeric odorant receptor channel (TC 1.A.69) family. Or49a subfamily. As to quaternary structure, interacts with Orco. Complexes exist early in the endomembrane system in olfactory sensory neurons (OSNs), coupling these complexes to the conserved ciliary trafficking pathway. Expressed in olfactory sensory neurons in the antenna.

Its subcellular location is the cell membrane. Its function is as follows. Odorant receptor which mediates acceptance or avoidance behavior, depending on its substrates. The odorant receptor repertoire encodes a large collection of odor stimuli that vary widely in identity, intensity, and duration. Forms a complex with Orco to form odorant-sensing units, providing sensitive and prolonged odorant signaling and calcium permeability. Involved in the behavioral responses to benzaldehyde and acetophenone. This chain is Odorant receptor 67a (Or67a), found in Drosophila melanogaster (Fruit fly).